The following is a 234-amino-acid chain: Phosphoribosylaminoimidazole-succinocarboxamide synthase (234 aa).

It belongs to the SAICAR synthetase family.

It catalyses the reaction 5-amino-1-(5-phospho-D-ribosyl)imidazole-4-carboxylate + L-aspartate + ATP = (2S)-2-[5-amino-1-(5-phospho-beta-D-ribosyl)imidazole-4-carboxamido]succinate + ADP + phosphate + 2 H(+). It participates in purine metabolism; IMP biosynthesis via de novo pathway; 5-amino-1-(5-phospho-D-ribosyl)imidazole-4-carboxamide from 5-amino-1-(5-phospho-D-ribosyl)imidazole-4-carboxylate: step 1/2. The polypeptide is Phosphoribosylaminoimidazole-succinocarboxamide synthase (Clostridium botulinum (strain ATCC 19397 / Type A)).